Here is a 156-residue protein sequence, read N- to C-terminus: Small ribosomal subunit protein uS7 (156 aa).

It belongs to the universal ribosomal protein uS7 family. In terms of assembly, part of the 30S ribosomal subunit. Contacts proteins S9 and S11.

Functionally, one of the primary rRNA binding proteins, it binds directly to 16S rRNA where it nucleates assembly of the head domain of the 30S subunit. Is located at the subunit interface close to the decoding center, probably blocks exit of the E-site tRNA. In Bifidobacterium longum (strain NCC 2705), this protein is Small ribosomal subunit protein uS7.